The sequence spans 290 residues: ATP synthase subunit a (290 aa).

7 helical membrane passes run 54 to 74, 115 to 135, 136 to 156, 164 to 184, 201 to 221, 233 to 253, and 254 to 274; these read AVHL…ILLF, IAPL…LKWI, PVDY…KIVP, FGLS…VKGF, LVPF…LSLA, VVFI…NVPW, and AIFH…LTVV.

The protein belongs to the ATPase A chain family. As to quaternary structure, F-type ATPases have 2 components, CF(1) - the catalytic core - and CF(0) - the membrane proton channel. CF(1) has five subunits: alpha(3), beta(3), gamma(1), delta(1), epsilon(1). CF(0) has three main subunits: a(1), b(2) and c(9-12). The alpha and beta chains form an alternating ring which encloses part of the gamma chain. CF(1) is attached to CF(0) by a central stalk formed by the gamma and epsilon chains, while a peripheral stalk is formed by the delta and b chains.

The protein resides in the cell inner membrane. Key component of the proton channel; it plays a direct role in the translocation of protons across the membrane. In Stutzerimonas stutzeri (strain A1501) (Pseudomonas stutzeri), this protein is ATP synthase subunit a.